The primary structure comprises 124 residues: MARIAGVDIPKNKRGVIALTYIFGLGKSRAIEILEKAQVSQDKKVQDWNDDEIGAIRDAVSFYKIEGELRSEVSLNIKRLMDIGCYRGIRHRSGLPLRGQRTKNNSRTRKGKRKTVANKKKATK.

The disordered stretch occupies residues 94-124 (GLPLRGQRTKNNSRTRKGKRKTVANKKKATK). A compositionally biased stretch (basic residues) spans 100 to 124 (QRTKNNSRTRKGKRKTVANKKKATK).

Belongs to the universal ribosomal protein uS13 family. As to quaternary structure, part of the 30S ribosomal subunit. Forms a loose heterodimer with protein S19. Forms two bridges to the 50S subunit in the 70S ribosome.

Its function is as follows. Located at the top of the head of the 30S subunit, it contacts several helices of the 16S rRNA. In the 70S ribosome it contacts the 23S rRNA (bridge B1a) and protein L5 of the 50S subunit (bridge B1b), connecting the 2 subunits; these bridges are implicated in subunit movement. Contacts the tRNAs in the A and P-sites. The protein is Small ribosomal subunit protein uS13 of Flavobacterium johnsoniae (strain ATCC 17061 / DSM 2064 / JCM 8514 / BCRC 14874 / CCUG 350202 / NBRC 14942 / NCIMB 11054 / UW101) (Cytophaga johnsonae).